The sequence spans 132 residues: Nickel-responsive regulator (132 aa).

4 residues coordinate Ni(2+): H76, H87, H89, and C95.

It belongs to the transcriptional regulatory CopG/NikR family. Homotetramer. Ni(2+) is required as a cofactor.

Functionally, transcriptional repressor of the nikABCDE operon. Is active in the presence of excessive concentrations of intracellular nickel. The chain is Nickel-responsive regulator from Klebsiella pneumoniae subsp. pneumoniae (strain ATCC 700721 / MGH 78578).